We begin with the raw amino-acid sequence, 396 residues long: Seminal vesicle major clotting proteins (396 aa).

The first 21 residues, M1 to G21, serve as a signal peptide directing secretion. The segment at M45–G178 is disordered. Positions R60–E152 are enriched in basic and acidic residues. SVP-3/-4 repeat repeat units follow at residues E65–V88, E89–V112, and E113–A136. Residues E137–R157 form an SVP-3/-4 repeat; truncated repeat. A propeptide spanning residues K177–A192 is cleaved from the precursor. SVP-1 clotting repeat units follow at residues I194–S217, V218–S241, V242–S265, M266–S289, M290–S313, V314–S337, V338–S361, and V362–S385. The 9 X tandem repeats of SVP-1 like motif stretch occupies residues I194 to I396. Positions Q377–I396 are disordered. An SVP-1 clotting 9; truncated repeat occupies V386–I396.

The protein to the SVP-2 precursor, particularly in regions where protein processing must occur. In terms of processing, SVP-3 may be a post-translationally modified form of SVP-4. Post-translationally, covalent clotting of SVP-1 is catalyzed by a transglutaminase secreted by the anterior prostate through the formation of gamma-glutamyl-epsilon-lysine cross-links. The conserved 2 Lys and 1 Gln residues per functional unit seem to be the residues involved in the formation of those cross-links.

The protein resides in the secreted. Functionally, SVP-1 serves as substrate in the formation of the copulatory plug. SVP-3 and SVP-4 may also contribute to the clot. The chain is Seminal vesicle major clotting proteins from Cavia porcellus (Guinea pig).